A 186-amino-acid polypeptide reads, in one-letter code: Ribosome maturation factor RimM (186 aa).

The 76-residue stretch at 93–168 (EDDFYLVDLI…VLIDPPQEEN (76 aa)) folds into the PRC barrel domain. The tract at residues 163–186 (PPQEENAPEFGRNELGHDDGGEAA) is disordered. The span at 173 to 186 (GRNELGHDDGGEAA) shows a compositional bias: basic and acidic residues.

This sequence belongs to the RimM family. As to quaternary structure, binds ribosomal protein uS19.

The protein localises to the cytoplasm. Functionally, an accessory protein needed during the final step in the assembly of 30S ribosomal subunit, possibly for assembly of the head region. Essential for efficient processing of 16S rRNA. May be needed both before and after RbfA during the maturation of 16S rRNA. It has affinity for free ribosomal 30S subunits but not for 70S ribosomes. This chain is Ribosome maturation factor RimM, found in Granulibacter bethesdensis (strain ATCC BAA-1260 / CGDNIH1).